Here is a 372-residue protein sequence, read N- to C-terminus: N-methyl-L-tryptophan oxidase (372 aa).

An FAD-binding site is contributed by 4 to 34 (DLIIIGSGSVGAAAGYYATRAGLNVLMTDAH). At C308 the chain carries S-8alpha-FAD cysteine.

The protein belongs to the MSOX/MTOX family. MTOX subfamily. As to quaternary structure, monomer. Requires FAD as cofactor.

It carries out the reaction N(alpha)-methyl-L-tryptophan + O2 + H2O = L-tryptophan + formaldehyde + H2O2. Catalyzes the oxidative demethylation of N-methyl-L-tryptophan. This chain is N-methyl-L-tryptophan oxidase, found in Escherichia coli (strain K12 / DH10B).